Here is a 351-residue protein sequence, read N- to C-terminus: Photosystem II D2 protein (351 aa).

A helical transmembrane segment spans residues Thr-39 to Thr-59. Residue His-116 coordinates chlorophyll a. The helical transmembrane segment at Gly-123–Pro-139 threads the bilayer. Gln-128 and Asn-141 together coordinate pheophytin a. Residues Val-151–Ala-164 form a helical membrane-spanning segment. Residue His-196 participates in chlorophyll a binding. The chain crosses the membrane as a helical span at residues Gly-206–Asp-226. Residues His-213 and Phe-260 each contribute to the a plastoquinone site. His-213 is a Fe cation binding site. His-267 contributes to the Fe cation binding site. The chain crosses the membrane as a helical span at residues Gly-277 to Arg-293.

This sequence belongs to the reaction center PufL/M/PsbA/D family. As to quaternary structure, PSII is composed of 1 copy each of membrane proteins PsbA, PsbB, PsbC, PsbD, PsbE, PsbF, PsbH, PsbI, PsbJ, PsbK, PsbL, PsbM, PsbT, PsbX, PsbY, PsbZ, Psb30/Ycf12, at least 3 peripheral proteins of the oxygen-evolving complex and a large number of cofactors. It forms dimeric complexes. The D1/D2 heterodimer binds P680, chlorophylls that are the primary electron donor of PSII, and subsequent electron acceptors. It shares a non-heme iron and each subunit binds pheophytin, quinone, additional chlorophylls, carotenoids and lipids. There is also a Cl(-1) ion associated with D1 and D2, which is required for oxygen evolution. The PSII complex binds additional chlorophylls, carotenoids and specific lipids. serves as cofactor.

The protein resides in the plastid. It localises to the chloroplast thylakoid membrane. The catalysed reaction is 2 a plastoquinone + 4 hnu + 2 H2O = 2 a plastoquinol + O2. Its function is as follows. Photosystem II (PSII) is a light-driven water:plastoquinone oxidoreductase that uses light energy to abstract electrons from H(2)O, generating O(2) and a proton gradient subsequently used for ATP formation. It consists of a core antenna complex that captures photons, and an electron transfer chain that converts photonic excitation into a charge separation. The D1/D2 (PsbA/PsbD) reaction center heterodimer binds P680, the primary electron donor of PSII as well as several subsequent electron acceptors. D2 is needed for assembly of a stable PSII complex. This is Photosystem II D2 protein from Phaeodactylum tricornutum (strain CCAP 1055/1).